We begin with the raw amino-acid sequence, 215 residues long: Large ribosomal subunit protein uL3c (215 aa).

The disordered stretch occupies residues 132-151; the sequence is RGAMSHGSKSHRRPGSIGAG.

This sequence belongs to the universal ribosomal protein uL3 family. As to quaternary structure, part of the 50S ribosomal subunit.

The protein resides in the plastid. It localises to the chloroplast. In terms of biological role, one of the primary rRNA binding proteins, it binds directly near the 3'-end of the 23S rRNA, where it nucleates assembly of the 50S subunit. In Cyanidium caldarium (Red alga), this protein is Large ribosomal subunit protein uL3c (rpl3).